Consider the following 207-residue polypeptide: Putative zinc finger protein 137 (207 aa).

Residues Cys-72–His-94 form a C2H2-type 1 zinc finger. The C2H2-type 2; degenerate zinc finger occupies Tyr-100 to His-122. The segment at Tyr-128–His-150 adopts a C2H2-type 3; degenerate zinc-finger fold. 2 consecutive C2H2-type zinc fingers follow at residues His-156 to His-178 and Tyr-184 to His-206.

Belongs to the krueppel C2H2-type zinc-finger protein family.

It localises to the nucleus. In terms of biological role, may be involved in transcriptional regulation. The chain is Putative zinc finger protein 137 (ZNF137P) from Homo sapiens (Human).